A 380-amino-acid chain; its full sequence is Hydrogenase maturation factor HypD1 (380 aa).

Positions 36, 64, and 67 each coordinate Fe cation.

It belongs to the HypD family. It depends on [4Fe-4S] cluster as a cofactor.

Its pathway is protein modification; [NiFe] hydrogenase maturation. Involved in the maturation of [NiFe] hydrogenases. Involved in the biosynthesis of the Fe(CN)(2)CO cofactor. The protein is Hydrogenase maturation factor HypD1 (hypD1) of Bradyrhizobium diazoefficiens (strain JCM 10833 / BCRC 13528 / IAM 13628 / NBRC 14792 / USDA 110).